The primary structure comprises 1512 residues: Probable RNA-directed RNA polymerase (1512 aa).

Belongs to the totiviridae RNA-directed RNA polymerase family.

It carries out the reaction RNA(n) + a ribonucleoside 5'-triphosphate = RNA(n+1) + diphosphate. In terms of biological role, RNA-dependent RNA polymerase which replicates the viral genome. Catalyzes the transcription of fully conservative plus-strand genomic RNAs that are extruded from the virion into the cytoplasm where they function as mRNAs for translation of viral proteins and also as substrates for encapsidation to form new virions. Once encapsidated, the positive strand is converted to dsRNA by the RNA-directed RNA polymerase. The sequence is that of Probable RNA-directed RNA polymerase (gag-pol) from Saccharomyces cerevisiae virus L-BC (ScV-L-BC).